A 135-amino-acid chain; its full sequence is NAD(P)H-quinone oxidoreductase subunit 3 (135 aa).

A run of 3 helical transmembrane segments spans residues 15-35, 79-99, and 104-124; these read LMFVLPGYDAFLGFLLIAAAV, MFALVFVIFDVETVFLYPWAV, and LGLLAFIEALVFITILLVALA.

Belongs to the complex I subunit 3 family. As to quaternary structure, NDH-1 can be composed of about 15 different subunits; different subcomplexes with different compositions have been identified which probably have different functions.

It localises to the cellular thylakoid membrane. It carries out the reaction a plastoquinone + NADH + (n+1) H(+)(in) = a plastoquinol + NAD(+) + n H(+)(out). The catalysed reaction is a plastoquinone + NADPH + (n+1) H(+)(in) = a plastoquinol + NADP(+) + n H(+)(out). In terms of biological role, NDH-1 shuttles electrons from an unknown electron donor, via FMN and iron-sulfur (Fe-S) centers, to quinones in the respiratory and/or the photosynthetic chain. The immediate electron acceptor for the enzyme in this species is believed to be plastoquinone. Couples the redox reaction to proton translocation, and thus conserves the redox energy in a proton gradient. Cyanobacterial NDH-1 also plays a role in inorganic carbon-concentration. In Synechococcus sp. (strain CC9311), this protein is NAD(P)H-quinone oxidoreductase subunit 3.